The primary structure comprises 179 residues: NAD(P)H-quinone oxidoreductase subunit 6, chloroplastic (179 aa).

5 helical membrane-spanning segments follow: residues 8–28 (ITLF…VFFN), 30–50 (IIYS…LYLL), 58–78 (VAQV…AIML), 98–118 (SFCV…TTPW), and 150–170 (VLPF…AVII).

It belongs to the complex I subunit 6 family. As to quaternary structure, NDH is composed of at least 16 different subunits, 5 of which are encoded in the nucleus.

The protein localises to the plastid. The protein resides in the chloroplast thylakoid membrane. The catalysed reaction is a plastoquinone + NADH + (n+1) H(+)(in) = a plastoquinol + NAD(+) + n H(+)(out). It catalyses the reaction a plastoquinone + NADPH + (n+1) H(+)(in) = a plastoquinol + NADP(+) + n H(+)(out). Functionally, NDH shuttles electrons from NAD(P)H:plastoquinone, via FMN and iron-sulfur (Fe-S) centers, to quinones in the photosynthetic chain and possibly in a chloroplast respiratory chain. The immediate electron acceptor for the enzyme in this species is believed to be plastoquinone. Couples the redox reaction to proton translocation, and thus conserves the redox energy in a proton gradient. This is NAD(P)H-quinone oxidoreductase subunit 6, chloroplastic (ndhG) from Chaetosphaeridium globosum (Charophycean green alga).